The chain runs to 120 residues: MTRIKRGSIARARRTKIRFFASKFRGSHSRLTRSIIQQGIRAFVSSQRDRDKKKRDFRRLWITRLNAAIRAIGVGYSYSASIHNLYKSQLILNRKILTQIAILNRNCLYMISNEILKSGV.

This sequence belongs to the bacterial ribosomal protein bL20 family.

Its subcellular location is the plastid. Binds directly to 23S ribosomal RNA and is necessary for the in vitro assembly process of the 50S ribosomal subunit. It is not involved in the protein synthesizing functions of that subunit. The sequence is that of Large ribosomal subunit protein bL20c from Cuscuta obtusiflora (Peruvian dodder).